A 26-amino-acid polypeptide reads, in one-letter code: DNA-binding transcriptional regulator NtrC (26 aa).

One can recognise a Response regulatory domain in the interval 4 to 26 (TILVADDDAAIRTVLNQALSRAG).

Post-translationally, phosphorylated and dephosphorylated by NtrB.

It is found in the cytoplasm. Functionally, member of the two-component regulatory system NtrB/NtrC, which controls expression of the nitrogen-regulated (ntr) genes in response to nitrogen limitation. Phosphorylated NtrC binds directly to DNA and stimulates the formation of open promoter-sigma54-RNA polymerase complexes. The chain is DNA-binding transcriptional regulator NtrC (ntrC) from Rhizobium leguminosarum bv. phaseoli.